The following is a 645-amino-acid chain: Glucans biosynthesis glucosyltransferase H (645 aa).

The interval 1-28 (MDGTVTLSPAPTDLPPVSSLDAGQPTLP) is disordered. 7 consecutive transmembrane segments (helical) span residues 64–84 (LIGGTLTATAVAVWVMLSVLW), 98–118 (LFVLLFAWIAMSFASAVAGFI), 423–443 (APMWGMLMLVGIGIPLAGAGI), 465–485 (AIWIFVCTMFVLLAPKLLGYI), 504–524 (ALSILLETVLAALMAPVVMYL), 558–578 (SYGGLSVFGLFMGTLAYLVSP), and 580–600 (LAAWMAPVIVGMVVSIPVVAV).

It belongs to the glycosyltransferase 2 family. OpgH subfamily.

Its subcellular location is the cell inner membrane. Its pathway is glycan metabolism; osmoregulated periplasmic glucan (OPG) biosynthesis. Involved in the biosynthesis of osmoregulated periplasmic glucans (OPGs). The chain is Glucans biosynthesis glucosyltransferase H from Xanthomonas campestris pv. campestris (strain 8004).